The sequence spans 726 residues: Penicillin-binding protein 1A (726 aa).

Topologically, residues 1–3 (MKK) are cytoplasmic. A helical; Signal-anchor for type II membrane protein membrane pass occupies residues 4–24 (LVIGILGIVIALFVGLLVFLI). Over 25-726 (PIYKNLPDPK…SDLNAILGLR (702 aa)) the chain is Periplasmic. The transglycosylase stretch occupies residues 45 to 213 (SEVYDAKGRL…AKYNPFYHPE (169 aa)). Glu83 acts as the Proton donor; for transglycosylase activity in catalysis. The interval 379 to 662 (KYLGGNRAEI…SRVALPIWID (284 aa)) is transpeptidase. Ser432 serves as the catalytic Acyl-ester intermediate; for transpeptidase activity.

The protein in the N-terminal section; belongs to the glycosyltransferase 51 family. In the C-terminal section; belongs to the transpeptidase family.

It is found in the cell inner membrane. It catalyses the reaction [GlcNAc-(1-&gt;4)-Mur2Ac(oyl-L-Ala-gamma-D-Glu-L-Lys-D-Ala-D-Ala)](n)-di-trans,octa-cis-undecaprenyl diphosphate + beta-D-GlcNAc-(1-&gt;4)-Mur2Ac(oyl-L-Ala-gamma-D-Glu-L-Lys-D-Ala-D-Ala)-di-trans,octa-cis-undecaprenyl diphosphate = [GlcNAc-(1-&gt;4)-Mur2Ac(oyl-L-Ala-gamma-D-Glu-L-Lys-D-Ala-D-Ala)](n+1)-di-trans,octa-cis-undecaprenyl diphosphate + di-trans,octa-cis-undecaprenyl diphosphate + H(+). The catalysed reaction is Preferential cleavage: (Ac)2-L-Lys-D-Ala-|-D-Ala. Also transpeptidation of peptidyl-alanyl moieties that are N-acyl substituents of D-alanine.. Its pathway is cell wall biogenesis; peptidoglycan biosynthesis. The sequence is that of Penicillin-binding protein 1A (mrcA) from Aquifex aeolicus (strain VF5).